A 272-amino-acid polypeptide reads, in one-letter code: HMP-PP phosphatase (272 aa).

Aspartate 8 acts as the Nucleophile in catalysis. Mg(2+) is bound by residues aspartate 8, aspartate 10, and aspartate 212.

The protein belongs to the HAD-like hydrolase superfamily. Cof family. It depends on Mg(2+) as a cofactor.

The catalysed reaction is 4-amino-2-methyl-5-(diphosphooxymethyl)pyrimidine + H2O = 4-amino-2-methyl-5-(phosphooxymethyl)pyrimidine + phosphate + H(+). Catalyzes the hydrolysis of 4-amino-2-methyl-5-hydroxymethylpyrimidine pyrophosphate (HMP-PP) to 4-amino-2-methyl-5-hydroxymethylpyrimidine phosphate (HMP-P). This Salmonella choleraesuis (strain SC-B67) protein is HMP-PP phosphatase.